Reading from the N-terminus, the 320-residue chain is Methenyltetrahydromethanopterin cyclohydrolase (320 aa).

The protein belongs to the MCH family. In terms of assembly, homodimer.

The protein resides in the cytoplasm. The catalysed reaction is 5,10-methenyl-5,6,7,8-tetrahydromethanopterin + H2O = N(5)-formyl-5,6,7,8-tetrahydromethanopterin + H(+). It participates in one-carbon metabolism; methanogenesis from CO(2); 5,10-methenyl-5,6,7,8-tetrahydromethanopterin from CO(2): step 3/3. Catalyzes the reversible interconversion of 5-formyl-H(4)MPT to methenyl-H(4)MPT(+). The sequence is that of Methenyltetrahydromethanopterin cyclohydrolase (mch) from Methanothermobacter marburgensis (strain ATCC BAA-927 / DSM 2133 / JCM 14651 / NBRC 100331 / OCM 82 / Marburg) (Methanobacterium thermoautotrophicum).